Reading from the N-terminus, the 475-residue chain is Ribulose bisphosphate carboxylase large chain (475 aa).

The propeptide occupies 1–2 (MS). Pro3 carries the post-translational modification N-acetylproline. Lys14 carries the N6,N6,N6-trimethyllysine modification. Residues Asn123 and Thr173 each contribute to the substrate site. The active-site Proton acceptor is Lys175. Lys177 lines the substrate pocket. Mg(2+)-binding residues include Lys201, Asp203, and Glu204. Lys201 is subject to N6-carboxylysine. Catalysis depends on His294, which acts as the Proton acceptor. Arg295, His327, and Ser379 together coordinate substrate.

The protein belongs to the RuBisCO large chain family. Type I subfamily. Heterohexadecamer of 8 large chains and 8 small chains; disulfide-linked. The disulfide link is formed within the large subunit homodimers. The cofactor is Mg(2+). In terms of processing, the disulfide bond which can form in the large chain dimeric partners within the hexadecamer appears to be associated with oxidative stress and protein turnover.

The protein resides in the plastid. It localises to the chloroplast. It carries out the reaction 2 (2R)-3-phosphoglycerate + 2 H(+) = D-ribulose 1,5-bisphosphate + CO2 + H2O. The catalysed reaction is D-ribulose 1,5-bisphosphate + O2 = 2-phosphoglycolate + (2R)-3-phosphoglycerate + 2 H(+). In terms of biological role, ruBisCO catalyzes two reactions: the carboxylation of D-ribulose 1,5-bisphosphate, the primary event in carbon dioxide fixation, as well as the oxidative fragmentation of the pentose substrate in the photorespiration process. Both reactions occur simultaneously and in competition at the same active site. This chain is Ribulose bisphosphate carboxylase large chain, found in Adiantum capillus-veneris (Maidenhair fern).